Consider the following 286-residue polypeptide: ATP synthase gamma chain (286 aa).

It belongs to the ATPase gamma chain family. In terms of assembly, F-type ATPases have 2 components, CF(1) - the catalytic core - and CF(0) - the membrane proton channel. CF(1) has five subunits: alpha(3), beta(3), gamma(1), delta(1), epsilon(1). CF(0) has three main subunits: a, b and c.

Its subcellular location is the cell inner membrane. Functionally, produces ATP from ADP in the presence of a proton gradient across the membrane. The gamma chain is believed to be important in regulating ATPase activity and the flow of protons through the CF(0) complex. The protein is ATP synthase gamma chain of Shewanella frigidimarina (strain NCIMB 400).